A 249-amino-acid polypeptide reads, in one-letter code: Mannose-binding protein A (249 aa).

Residues 1–20 form the signal peptide; the sequence is MLLFSSLPVLLLCVVTASYS. Residues 41-102 are disordered; the sequence is VTNGTPGRDG…KGDPGDTSGV (62 aa). A compositionally biased stretch (basic and acidic residues) spans 48 to 60; the sequence is RDGRDGPKGEKGE. P54 is subject to 4-hydroxyproline. 5-hydroxylysine occurs at positions 55 and 58. 2 O-linked (Gal...) hydroxylysine glycosylation sites follow: K55 and K58. Residues P61, P72, P78, and P89 each carry the 4-hydroxyproline modification. The Collagen-like domain occupies 64-98; that stretch reads GFRGSQGPPGKMGPPGNIGETGPLGPKGQKGDPGD. 5-hydroxylysine is present on residues K90 and K93. 2 O-linked (Gal...) hydroxylysine glycosylation sites follow: K90 and K93. One can recognise a C-type lectin domain in the interval 135-246; that stretch reads SRKKLYVTNG…CSSSFLAVCE (112 aa). 2 disulfides stabilise this stretch: C156–C245 and C223–C237. Ca(2+) contacts are provided by D189, E193, E213, N215, D216, E221, D222, N233, and D234. The tract at residues 213 to 221 is calcium-dependent carbohydrate binding; that stretch reads EPNDHGSGE.

In terms of assembly, interacts with MASP1 and MASP2. Forms oligomeric complexes of 3, 4, 5 or, predominantly, 6 homotrimers. The homotrimers appear as globular heads that are connected to a central hub by thin stalks. In terms of processing, hydroxylated on lysine and proline residues within the collagen-like domain. O-glycosylated. O-linked glycans on hydroxylysine residues consist of Glc-Gal disaccharides bound to the oxygen atom of post-translationally added hydroxyl groups. As to expression, detected in blood serum (at protein level). Expressed in liver. Weakly expressed in lung, testis and brain. Not detected in bone marrow and heart.

The protein localises to the secreted. In terms of biological role, calcium-dependent lectin. Plays a role in the innate immune response by binding mannose, fucose and N-acetylglucosamine on bacteria, including strains of A.suis, H.parasuis and A.pleuropneumoniae, and activates the lectin complement pathway. According to some authors, it only binds mannose. The chain is Mannose-binding protein A from Sus scrofa (Pig).